The chain runs to 198 residues: Recombination protein RecR (198 aa).

Residues 57 to 72 (CAMCNTFTEHEVCETC) form a C4-type zinc finger. In terms of domain architecture, Toprim spans 80–175 (ALLCVVETPG…KVSRLARGVP (96 aa)).

Belongs to the RecR family.

In terms of biological role, may play a role in DNA repair. It seems to be involved in an RecBC-independent recombinational process of DNA repair. It may act with RecF and RecO. This Janthinobacterium sp. (strain Marseille) (Minibacterium massiliensis) protein is Recombination protein RecR.